A 414-amino-acid polypeptide reads, in one-letter code: Arrestin domain-containing protein 3 (414 aa).

2 short sequence motifs (PPxY motif) span residues Pro346 to Tyr349 and Pro391 to Tyr394. The interval Leu393–Arg414 is disordered. Residues Ala405 to Arg414 show a composition bias toward basic and acidic residues.

It belongs to the arrestin family. As to quaternary structure, interacts (via PPxY motifs) with NEDD4 (via WW domains). Interacts with ADRB2. Interacts with ADRB3. Interacts with HGS (via PPxY motifs). Does not bind TXN (thioredoxin). Interacts with ITCH.

Its subcellular location is the cytoplasm. The protein localises to the cell membrane. It is found in the lysosome. It localises to the endosome. The protein resides in the early endosome. Its function is as follows. Adapter protein that plays a role in regulating cell-surface expression of adrenergic receptors and probably also other G protein-coupled receptors. Plays a role in NEDD4-mediated ubiquitination and endocytosis af activated ADRB2 and subsequent ADRB2 degradation. May recruit NEDD4 to ADRB2. Alternatively, may function as adapter protein that does not play a major role in recruiting NEDD4 to ADRB2, but rather plays a role in a targeting ADRB2 to endosomes. This chain is Arrestin domain-containing protein 3 (ARRDC3), found in Pongo abelii (Sumatran orangutan).